Reading from the N-terminus, the 528-residue chain is DEAD-box ATP-dependent RNA helicase 6 (528 aa).

2 stretches are compositionally biased toward low complexity: residues 1-15 and 65-80; these read MNNN…PPGI and QQYV…QQQQ. Residues 1-80 are disordered; it reads MNNNNNNRGR…GYPQQIQQQQ (80 aa). Positions 154 to 182 match the Q motif motif; the sequence is NEFEDYFLKRDLLRGIYEKGFEKPSPIQE. The Helicase ATP-binding domain maps to 185 to 355; sequence IPIALTGSDI…DRYLKKPYII (171 aa). 198–205 serves as a coordination point for ATP; the sequence is AKNGTGKT. The residue at position 260 (Thr260) is a Phosphothreonine. The short motif at 303–306 is the DEAD box element; that stretch reads DEAD. The region spanning 365–525 is the Helicase C-terminal domain; it reads GVTQYYAFVE…PIPSLIDKAI (161 aa).

This sequence belongs to the DEAD box helicase family. DDX6/DHH1 subfamily.

The protein localises to the cytoplasm. It localises to the P-body. The enzyme catalyses ATP + H2O = ADP + phosphate + H(+). In terms of biological role, ATP-dependent RNA helicase involved in mRNA turnover, and more specifically in mRNA decapping. The polypeptide is DEAD-box ATP-dependent RNA helicase 6 (RH6) (Arabidopsis thaliana (Mouse-ear cress)).